A 463-amino-acid polypeptide reads, in one-letter code: MVPALRYLGSVCGRARGIFPGGFSAAHTPASGKSRLLCQGGRRASTSSFDIVIIGGGIVGLASARALILRHPALSIGVLEKEKNLAVHQTGHNSGVIHSGIYYKPESLKAKLCVQGAALIYEYCNQKGISYKQCGKLIVAVEQEEIPRLQALYERGLQNGVQGLRLIQQEDIKKKEPYCRGLMAIDCPYTGIVDYRQVAFSFAKDFQEAGGSVLTNFEVEDIEMARESPSRSKDGMKYPIVIRNTKGEEVRCQYVVTCAGLYSDRISELSGCNPNPRIVPFRGDYLVLKPEKRYLVKGNIYPVPDSRFPFLGVHFTPRMDGNIWLGPNAILAFKREGYRPFDFSARDIMDIIIKSGLIKLVFQNFSYGVNEMYKACFLSATVKHLQKFIPEITISDVLRGPAGVRAQALDRDGNLIEDFVFDGGVGDIGNRILHVRNAPSPAATSSLAISGMIADEVQQRFKL.

Residues 1–52 constitute a mitochondrion transit peptide; that stretch reads MVPALRYLGSVCGRARGIFPGGFSAAHTPASGKSRLLCQGGRRASTSSFDIV. N6-acetyllysine is present on residues lysine 104 and lysine 173.

This sequence belongs to the L2HGDH family. It depends on FAD as a cofactor.

The protein localises to the mitochondrion. It carries out the reaction (S)-2-hydroxyglutarate + A = 2-oxoglutarate + AH2. This is L-2-hydroxyglutarate dehydrogenase, mitochondrial (L2HGDH) from Bos taurus (Bovine).